We begin with the raw amino-acid sequence, 66 residues long: Cell division protein ZapB (66 aa).

Residues 3-59 (LELLSQLETKIQATLENIELLKMELEEEKQKSTQLAEKNQKLQQDLNSWSDKVNGLV) adopt a coiled-coil conformation.

The protein belongs to the ZapB family. Homodimer. The ends of the coiled-coil dimer bind to each other, forming polymers. Interacts with FtsZ.

It localises to the cytoplasm. In terms of biological role, non-essential, abundant cell division factor that is required for proper Z-ring formation. It is recruited early to the divisome by direct interaction with FtsZ, stimulating Z-ring assembly and thereby promoting cell division earlier in the cell cycle. Its recruitment to the Z-ring requires functional FtsA or ZipA. This chain is Cell division protein ZapB, found in Shewanella denitrificans (strain OS217 / ATCC BAA-1090 / DSM 15013).